Here is a 499-residue protein sequence, read N- to C-terminus: Glutamyl-tRNA(Gln) amidotransferase subunit A (499 aa).

Catalysis depends on charge relay system residues Lys79 and Ser154. The active-site Acyl-ester intermediate is Ser178.

This sequence belongs to the amidase family. GatA subfamily. Heterotrimer of A, B and C subunits.

The catalysed reaction is L-glutamyl-tRNA(Gln) + L-glutamine + ATP + H2O = L-glutaminyl-tRNA(Gln) + L-glutamate + ADP + phosphate + H(+). Its function is as follows. Allows the formation of correctly charged Gln-tRNA(Gln) through the transamidation of misacylated Glu-tRNA(Gln) in organisms which lack glutaminyl-tRNA synthetase. The reaction takes place in the presence of glutamine and ATP through an activated gamma-phospho-Glu-tRNA(Gln). The polypeptide is Glutamyl-tRNA(Gln) amidotransferase subunit A (Psychrobacter sp. (strain PRwf-1)).